The primary structure comprises 84 residues: Small ribosomal subunit protein uS17 (84 aa).

This sequence belongs to the universal ribosomal protein uS17 family. As to quaternary structure, part of the 30S ribosomal subunit.

Functionally, one of the primary rRNA binding proteins, it binds specifically to the 5'-end of 16S ribosomal RNA. The chain is Small ribosomal subunit protein uS17 from Borrelia duttonii (strain Ly).